The chain runs to 314 residues: tRNA pseudouridine synthase B (314 aa).

Residue His43 participates in substrate binding. Asp48 functions as the Nucleophile in the catalytic mechanism. Residues Tyr76, Tyr179, and Leu200 each contribute to the substrate site.

Belongs to the pseudouridine synthase TruB family. Type 1 subfamily.

The enzyme catalyses uridine(55) in tRNA = pseudouridine(55) in tRNA. Its function is as follows. Responsible for synthesis of pseudouridine from uracil-55 in the psi GC loop of transfer RNAs. This Citrobacter koseri (strain ATCC BAA-895 / CDC 4225-83 / SGSC4696) protein is tRNA pseudouridine synthase B.